Consider the following 253-residue polypeptide: DNA repair protein RecO (253 aa).

The protein belongs to the RecO family.

Functionally, involved in DNA repair and RecF pathway recombination. This Streptococcus agalactiae serotype Ia (strain ATCC 27591 / A909 / CDC SS700) protein is DNA repair protein RecO.